The primary structure comprises 86 residues: Stage V sporulation protein S (86 aa).

Its function is as follows. Interferes with sporulation at an early stage. Seems to play a positive role in allowing cells to progress beyond stage V of sporulation. This Bacillus subtilis (strain 168) protein is Stage V sporulation protein S.